The primary structure comprises 202 residues: Putative transmembrane protein ORF202 (202 aa).

The next 5 membrane-spanning stretches (helical) occupy residues 13 to 33 (AIAF…FHYI), 40 to 60 (VFYL…LFLG), 87 to 107 (YYPV…ISVF), 156 to 176 (YGAL…HSLS), and 177 to 197 (LTAF…DLWA).

It is found in the host membrane. The protein is Putative transmembrane protein ORF202 of Acidianus filamentous virus 2 (isolate Italy/Pozzuoli) (AFV-2).